A 540-amino-acid chain; its full sequence is DM7 family protein GD24576 (540 aa).

The disordered stretch occupies residues 416–443 (ATDTRGRDEIRTSCDQSQEKDEGSAEAD). Positions 417-443 (TDTRGRDEIRTSCDQSQEKDEGSAEAD) are enriched in basic and acidic residues.

The protein belongs to the DM7 family.

This Drosophila simulans (Fruit fly) protein is DM7 family protein GD24576.